A 166-amino-acid polypeptide reads, in one-letter code: UPF0561 protein C2orf68 (166 aa).

The segment at 32 to 107 (NQIARDDYDK…SELEPSGHQL (76 aa)) is disordered. 2 stretches are compositionally biased toward basic and acidic residues: residues 34 to 49 (IARD…AAKE) and 73 to 85 (RHRD…RNPD). Over residues 91 to 104 (ESSSSGGSELEPSG) the composition is skewed to low complexity.

The protein belongs to the UPF0561 family.

This chain is UPF0561 protein C2orf68 (C2orf68), found in Homo sapiens (Human).